The sequence spans 206 residues: CASP-like protein 2C1 (206 aa).

Residues 1-31 (MSVLGVGPRTVTPHLRKGMMESSSGISLARA) are Cytoplasmic-facing. A helical transmembrane segment spans residues 32–52 (EAFLRLFAILVLVLTACLLGF). The Extracellular segment spans residues 53-71 (DTQTKLLFSTIKKTATFRD). Residues 72–92 (LGALQVVVYVDSVAAGYNLLQ) form a helical membrane-spanning segment. Topologically, residues 93–111 (LGRGFISAKLKGKLINVSY) are cytoplasmic. The helical transmembrane segment at 112-132 (VTLPWVCFLLDQAAVYTVFSA) threads the bilayer. Residues 133-161 (NTAALQASIIAVTGESSLQWMKVCNRYTR) are Extracellular-facing. Residues 162–182 (FCIQVGGALLSGYLASLLMVL) traverse the membrane as a helical segment. Over 183 to 206 (LSSLSAFSLFRLYSPKQFHLLKPT) the chain is Cytoplasmic.

Belongs to the Casparian strip membrane proteins (CASP) family. In terms of assembly, homodimer and heterodimers.

It localises to the cell membrane. This is CASP-like protein 2C1 from Vitis vinifera (Grape).